Reading from the N-terminus, the 418-residue chain is 3-phosphoshikimate 1-carboxyvinyltransferase (418 aa).

The 3-phosphoshikimate site is built by Lys-26, Ser-27, and Arg-31. Lys-26 is a phosphoenolpyruvate binding site. Phosphoenolpyruvate is bound by residues Gly-97 and Arg-125. The 3-phosphoshikimate site is built by Ser-170, Ser-171, Gln-172, Asp-297, Asn-320, and Lys-324. A phosphoenolpyruvate-binding site is contributed by Gln-172. Asp-297 serves as the catalytic Proton acceptor. Positions 328, 375, and 400 each coordinate phosphoenolpyruvate.

Belongs to the EPSP synthase family. As to quaternary structure, monomer.

It localises to the cytoplasm. It catalyses the reaction 3-phosphoshikimate + phosphoenolpyruvate = 5-O-(1-carboxyvinyl)-3-phosphoshikimate + phosphate. It participates in metabolic intermediate biosynthesis; chorismate biosynthesis; chorismate from D-erythrose 4-phosphate and phosphoenolpyruvate: step 6/7. Functionally, catalyzes the transfer of the enolpyruvyl moiety of phosphoenolpyruvate (PEP) to the 5-hydroxyl of shikimate-3-phosphate (S3P) to produce enolpyruvyl shikimate-3-phosphate and inorganic phosphate. The chain is 3-phosphoshikimate 1-carboxyvinyltransferase from Pseudomonas savastanoi pv. phaseolicola (strain 1448A / Race 6) (Pseudomonas syringae pv. phaseolicola (strain 1448A / Race 6)).